The primary structure comprises 211 residues: tRNA (guanine-N(7)-)-methyltransferase (211 aa).

The S-adenosyl-L-methionine site is built by Glu43, Glu68, Asp95, and Asp117. The active site involves Asp117. Residues Lys121, Asp153, and 190-193 each bind substrate; that span reads TEYE.

It belongs to the class I-like SAM-binding methyltransferase superfamily. TrmB family.

The catalysed reaction is guanosine(46) in tRNA + S-adenosyl-L-methionine = N(7)-methylguanosine(46) in tRNA + S-adenosyl-L-homocysteine. The protein operates within tRNA modification; N(7)-methylguanine-tRNA biosynthesis. Functionally, catalyzes the formation of N(7)-methylguanine at position 46 (m7G46) in tRNA. This is tRNA (guanine-N(7)-)-methyltransferase from Staphylococcus carnosus (strain TM300).